We begin with the raw amino-acid sequence, 81 residues long: Teretoxin Tsu6.8 (81 aa).

An N-terminal signal peptide occupies residues 1-21 (MATSGRLLCLCLVLGLIFESL). A propeptide spanning residues 22-45 (GHPVMGEKRAGENASPSARSLPKR) is cleaved from the precursor.

This sequence belongs to the teretoxin M (TM) superfamily. Post-translationally, contains 3 disulfide bonds. Expressed by the venom duct.

It localises to the secreted. The sequence is that of Teretoxin Tsu6.8 from Terebra subulata (Chocolate spotted auger).